A 473-amino-acid polypeptide reads, in one-letter code: Serine palmitoyltransferase 1 (473 aa).

The Lumenal portion of the chain corresponds to 1–15 (MATVAEQWVLVEMVQ). The interaction with SPTLC2 stretch occupies residues 1–66 (MATVAEQWVL…KEELIEEWQP (66 aa)). Residues 16–36 (ALYEAPAYHLILEGILILWII) traverse the membrane as a helical segment. Residues 37-473 (RLLFSKTYKL…ISEVAQTVLL (437 aa)) are Cytoplasmic-facing. Residue Y164 is modified to Phosphotyrosine; by ABL.

This sequence belongs to the class-II pyridoxal-phosphate-dependent aminotransferase family. In terms of assembly, component of the serine palmitoyltransferase (SPT) complex, which is also composed of SPTLC2 or SPTLC3 and SPTSSA or SPTSSB. The heterodimer with SPTLC2 or SPTLC3 forms the catalytic core of the enzyme, while SPTSSA or SPTSSB subunits determine substrate specificity. SPT also interacts with ORMDL proteins, especially ORMDL3, which negatively regulate SPT activity in the presence of ceramides. Forms dimers of heterodimers with SPTLC2. Interacts with RTN4. Pyridoxal 5'-phosphate is required as a cofactor. Post-translationally, phosphorylation at Tyr-164 inhibits activity and promotes cell survival.

Its subcellular location is the endoplasmic reticulum membrane. The catalysed reaction is L-serine + hexadecanoyl-CoA + H(+) = 3-oxosphinganine + CO2 + CoA. It carries out the reaction octadecanoyl-CoA + L-serine + H(+) = 3-oxoeicosasphinganine + CO2 + CoA. The enzyme catalyses tetradecanoyl-CoA + L-serine + H(+) = 3-oxohexadecasphinganine + CO2 + CoA. It catalyses the reaction dodecanoyl-CoA + L-serine + H(+) = 3-oxotetradecasphinganine + CO2 + CoA. Its pathway is lipid metabolism; sphingolipid metabolism. Its activity is regulated as follows. SPT complex catalytic activity is negatively regulated by ORMDL proteins, including ORMDL3, in the presence of ceramides. This mechanism allows to maintain ceramide levels at sufficient concentrations for the production of complex sphingolipids, but which prevents the accumulation of ceramides to levels that trigger apoptosis. Functionally, component of the serine palmitoyltransferase multisubunit enzyme (SPT) that catalyzes the initial and rate-limiting step in sphingolipid biosynthesis by condensing L-serine and activated acyl-CoA (most commonly palmitoyl-CoA) to form long-chain bases. The SPT complex is also composed of SPTLC2 or SPTLC3 and SPTSSA or SPTSSB. Within this complex, the heterodimer with SPTLC2 or SPTLC3 forms the catalytic core. The composition of the serine palmitoyltransferase (SPT) complex determines the substrate preference. The SPTLC1-SPTLC2-SPTSSA complex shows a strong preference for C16-CoA substrate, while the SPTLC1-SPTLC3-SPTSSA isozyme uses both C14-CoA and C16-CoA as substrates, with a slight preference for C14-CoA. The SPTLC1-SPTLC2-SPTSSB complex shows a strong preference for C18-CoA substrate, while the SPTLC1-SPTLC3-SPTSSB isozyme displays an ability to use a broader range of acyl-CoAs, without apparent preference. Required for adipocyte cell viability and metabolic homeostasis. The sequence is that of Serine palmitoyltransferase 1 (SPTLC1) from Bos taurus (Bovine).